A 196-amino-acid chain; its full sequence is Imidazoleglycerol-phosphate dehydratase (196 aa).

Belongs to the imidazoleglycerol-phosphate dehydratase family.

It localises to the cytoplasm. The catalysed reaction is D-erythro-1-(imidazol-4-yl)glycerol 3-phosphate = 3-(imidazol-4-yl)-2-oxopropyl phosphate + H2O. Its pathway is amino-acid biosynthesis; L-histidine biosynthesis; L-histidine from 5-phospho-alpha-D-ribose 1-diphosphate: step 6/9. The polypeptide is Imidazoleglycerol-phosphate dehydratase (Akkermansia muciniphila (strain ATCC BAA-835 / DSM 22959 / JCM 33894 / BCRC 81048 / CCUG 64013 / CIP 107961 / Muc)).